Reading from the N-terminus, the 43-residue chain is Metallothionein-2 (43 aa).

A Blocked amino end (Met) modification is found at M1.

It belongs to the metallothionein superfamily. Type 5 family.

In terms of biological role, this protein binds cations of several transition elements. Thought to be involved in metal ion homeostasis. This is Metallothionein-2 (MtnB) from Drosophila melanogaster (Fruit fly).